The following is a 190-amino-acid chain: Major intrinsically disordered NOTCH2-binding receptor 1-like (190 aa).

Position 79 is a phosphoserine (Ser-79). N-linked (GlcNAc...) asparagine glycosylation is found at Asn-109 and Asn-125. Residues 169 to 189 (GLILLVVISILVTIVTIITFF) form a helical membrane-spanning segment.

The protein belongs to the MINAR family. In terms of assembly, interacts with NOTCH2. In terms of tissue distribution, highly expressed in the auditory hair cells.

The protein localises to the lysosome membrane. The protein resides in the endoplasmic reticulum membrane. Binds cholesterol and may regulate the distribution and homeostasis of cholesterol in hair cells. May play a role in angiogenesis. This is Major intrinsically disordered NOTCH2-binding receptor 1-like from Homo sapiens (Human).